The sequence spans 367 residues: Anhydro-N-acetylmuramic acid kinase (367 aa).

11 to 18 (GTSLDGVD) is a binding site for ATP.

Belongs to the anhydro-N-acetylmuramic acid kinase family.

It carries out the reaction 1,6-anhydro-N-acetyl-beta-muramate + ATP + H2O = N-acetyl-D-muramate 6-phosphate + ADP + H(+). Its pathway is amino-sugar metabolism; 1,6-anhydro-N-acetylmuramate degradation. It participates in cell wall biogenesis; peptidoglycan recycling. Catalyzes the specific phosphorylation of 1,6-anhydro-N-acetylmuramic acid (anhMurNAc) with the simultaneous cleavage of the 1,6-anhydro ring, generating MurNAc-6-P. Is required for the utilization of anhMurNAc either imported from the medium or derived from its own cell wall murein, and thus plays a role in cell wall recycling. The protein is Anhydro-N-acetylmuramic acid kinase of Chromobacterium violaceum (strain ATCC 12472 / DSM 30191 / JCM 1249 / CCUG 213 / NBRC 12614 / NCIMB 9131 / NCTC 9757 / MK).